The chain runs to 510 residues: Cobyric acid synthase (510 aa).

In terms of domain architecture, GATase cobBQ-type spans 262–460; the sequence is EIKVGIIKLP…IHGIFENDEW (199 aa). The active-site Nucleophile is Cys343. His452 is a catalytic residue.

This sequence belongs to the CobB/CobQ family. CobQ subfamily.

It functions in the pathway cofactor biosynthesis; adenosylcobalamin biosynthesis. Its function is as follows. Catalyzes amidations at positions B, D, E, and G on adenosylcobyrinic A,C-diamide. NH(2) groups are provided by glutamine, and one molecule of ATP is hydrogenolyzed for each amidation. The protein is Cobyric acid synthase of Prochlorococcus marinus (strain MIT 9515).